We begin with the raw amino-acid sequence, 446 residues long: MSQTKKDQPKGNLAWWQLSLIGVGCTIGTGFFLGSSIAIVKSGFSVLLSFLIAGIGTYFVFEQLAKLSAKQPEKGSFCAYARKAFGKWAGFSNGWVYWTSEMLITGSQLTAISLFTKHWFPQVPLWVFASIYAVLGLLIIFTGLSVFEKTENVLAVIKTAAIFMFIVIAILALCGILSGGNHGIHVPNKTSEFFPYGAMGLWTGLIYAFYAFGGIEVMGLMAVHLKKPEEASKSGKLMLATLAIIYIISIGLALLLVPLHTFTEQDSPFITSLKGYNLEIILDIFNGIFIIAGFSTLVASLFAVTTLLCTMADDGDAPKCFTLKEGKKICWPALGLTFAGLVLSIILSLVLPKNIYEHMTTAAGLMLLYTWLFILFSSKKLTDPEGMGKTQIYLAMVLIAAAVSGTLFEKSSRPGFFVSIGFLVIIAIVTMIYQKKQGHKDRPASP.

12 helical membrane-spanning segments follow: residues 20–40 (LIGVGCTIGTGFFLGSSIAIV), 42–62 (SGFSVLLSFLIAGIGTYFVFE), 95–115 (WVYWTSEMLITGSQLTAISLF), 127–147 (VFASIYAVLGLLIIFTGLSVF), 160–180 (AAIFMFIVIAILALCGILSGG), 205–225 (LIYAFYAFGGIEVMGLMAVHL), 237–257 (LMLATLAIIYIISIGLALLLV), 284–304 (IFNGIFIIAGFSTLVASLFAV), 331–351 (WPALGLTFAGLVLSIILSLVL), 355–375 (IYEHMTTAAGLMLLYTWLFIL), 388–408 (GKTQIYLAMVLIAAAVSGTLF), and 414–434 (PGFFVSIGFLVIIAIVTMIYQ).

This sequence belongs to the amino acid-polyamine-organocation (APC) superfamily.

It is found in the cell membrane. This is an uncharacterized protein from Bacillus subtilis (strain 168).